We begin with the raw amino-acid sequence, 278 residues long: Large ribosomal subunit protein uL2 (278 aa).

2 disordered regions span residues 1–59 and 222–278; these read MAIR…GGHK and RGAA…NKKR. A compositionally biased stretch (polar residues) spans 16–27; that stretch reads SSVSEFSEITRS. 2 stretches are compositionally biased toward basic residues: residues 45-59 and 269-278; these read VHGH…GGHK and VRRRRPNKKR.

It belongs to the universal ribosomal protein uL2 family. In terms of assembly, part of the 50S ribosomal subunit. Forms a bridge to the 30S subunit in the 70S ribosome.

In terms of biological role, one of the primary rRNA binding proteins. Required for association of the 30S and 50S subunits to form the 70S ribosome, for tRNA binding and peptide bond formation. It has been suggested to have peptidyltransferase activity; this is somewhat controversial. Makes several contacts with the 16S rRNA in the 70S ribosome. The polypeptide is Large ribosomal subunit protein uL2 (Corynebacterium urealyticum (strain ATCC 43042 / DSM 7109)).